The sequence spans 333 residues: Acetoin:2,6-dichlorophenolindophenol oxidoreductase subunit alpha (333 aa).

As to quaternary structure, tetramer of 2 alpha and 2 beta subunits. The cofactor is thiamine diphosphate.

It participates in ketone degradation; acetoin degradation. Its function is as follows. Catalyzes the 2,6-dichlorophenolindophenol-dependent cleavage of acetoin into acetate and acetaldehyde. The alpha subunit is probably the catalytic subunit of the enzyme. This is Acetoin:2,6-dichlorophenolindophenol oxidoreductase subunit alpha (acoA) from Bacillus subtilis (strain 168).